The chain runs to 72 residues: DNA-directed RNA polymerase subunit epsilon (72 aa).

This sequence belongs to the RNA polymerase subunit epsilon family. As to quaternary structure, RNAP is composed of a core of 2 alpha, a beta and a beta' subunit. The core is associated with a delta subunit, and at least one of epsilon or omega. When a sigma factor is associated with the core the holoenzyme is formed, which can initiate transcription.

It carries out the reaction RNA(n) + a ribonucleoside 5'-triphosphate = RNA(n+1) + diphosphate. Its function is as follows. A non-essential component of RNA polymerase (RNAP). The chain is DNA-directed RNA polymerase subunit epsilon from Levilactobacillus brevis (strain ATCC 367 / BCRC 12310 / CIP 105137 / JCM 1170 / LMG 11437 / NCIMB 947 / NCTC 947) (Lactobacillus brevis).